A 376-amino-acid chain; its full sequence is Serine/threonine-protein kinase-transforming protein mos (376 aa).

The Protein kinase domain occupies 94–376 (VCLMHRLGSG…KALADSIEPM (283 aa)). ATP is bound by residues 100 to 108 (LGSGGFGSV) and Lys-121. Asp-229 acts as the Proton acceptor in catalysis.

Belongs to the protein kinase superfamily. Ser/Thr protein kinase family.

It catalyses the reaction L-seryl-[protein] + ATP = O-phospho-L-seryl-[protein] + ADP + H(+). It carries out the reaction L-threonyl-[protein] + ATP = O-phospho-L-threonyl-[protein] + ADP + H(+). The chain is Serine/threonine-protein kinase-transforming protein mos (V-MOS) from Moloney murine sarcoma virus (strain m1) (MoMSV).